The chain runs to 332 residues: Fructose-1,6-bisphosphatase class 1 (332 aa).

Residues Glu-89, Asp-110, Leu-112, and Asp-113 each coordinate Mg(2+). Substrate contacts are provided by residues 113–116 (DGSS), Asn-206, Tyr-239, 257–259 (YLY), and Lys-269. Mg(2+) is bound at residue Glu-275.

The protein belongs to the FBPase class 1 family. As to quaternary structure, homotetramer. The cofactor is Mg(2+).

Its subcellular location is the cytoplasm. The enzyme catalyses beta-D-fructose 1,6-bisphosphate + H2O = beta-D-fructose 6-phosphate + phosphate. It participates in carbohydrate biosynthesis; gluconeogenesis. The polypeptide is Fructose-1,6-bisphosphatase class 1 (Enterobacter sp. (strain 638)).